We begin with the raw amino-acid sequence, 631 residues long: Phosphomethylpyrimidine synthase (631 aa).

Residues Asn239, Met268, Tyr297, His333, 353–355 (SRG), 394–397 (DGLR), and Glu433 contribute to the substrate site. Residue His437 coordinates Zn(2+). Tyr460 lines the substrate pocket. His501 serves as a coordination point for Zn(2+). Residues Cys581, Cys584, and Cys589 each coordinate [4Fe-4S] cluster.

It belongs to the ThiC family. In terms of assembly, homodimer. The cofactor is [4Fe-4S] cluster.

It catalyses the reaction 5-amino-1-(5-phospho-beta-D-ribosyl)imidazole + S-adenosyl-L-methionine = 4-amino-2-methyl-5-(phosphooxymethyl)pyrimidine + CO + 5'-deoxyadenosine + formate + L-methionine + 3 H(+). It participates in cofactor biosynthesis; thiamine diphosphate biosynthesis. Its function is as follows. Catalyzes the synthesis of the hydroxymethylpyrimidine phosphate (HMP-P) moiety of thiamine from aminoimidazole ribotide (AIR) in a radical S-adenosyl-L-methionine (SAM)-dependent reaction. The sequence is that of Phosphomethylpyrimidine synthase from Shigella sonnei (strain Ss046).